We begin with the raw amino-acid sequence, 64 residues long: KDGYIIEHRGCKYSCFFGSSSWCNKECTLKKGSSGYCAWPACWCYGLPDSVKIFDSNNNKCSKK.

The region spanning 1-62 is the LCN-type CS-alpha/beta domain; the sequence is KDGYIIEHRG…IFDSNNNKCS (62 aa). Disulfide bonds link cysteine 11-cysteine 61, cysteine 15-cysteine 37, cysteine 23-cysteine 42, and cysteine 27-cysteine 44.

It belongs to the long (4 C-C) scorpion toxin superfamily. Sodium channel inhibitor family. Beta subfamily. In terms of tissue distribution, expressed by the venom gland.

The protein localises to the secreted. Functionally, inhibits the sodium (Nav) currents in an apparent irreversible manner. Produces small depolarization and induces repetitive firing in squid axons. Is specific for arthropods (crickets, triatomides, crabs and squids), but is non-toxic to mice. Shows antibacterial activity against both Gram-positive and Gram-negative bacteria. The sequence is that of Toxin Tce3 from Tityus cerroazul (Scorpion).